A 69-amino-acid chain; its full sequence is uncharacterized protein (69 aa).

The 51-residue stretch at 6–56 (SEECTPAKKKYDACFNDWYANKFLKGDLHNRDCDELFAEYKSCLLKALKTK) folds into the CHCH domain. 2 short sequence motifs (cx9C motif) span residues 9–19 (CTPAKKKYDAC) and 38–48 (CDELFAEYKSC). 2 disulfide bridges follow: cysteine 9/cysteine 48 and cysteine 19/cysteine 38.

The protein belongs to the TRIAP1/MDM35 family.

This is an uncharacterized protein from Schizosaccharomyces pombe (strain 972 / ATCC 24843) (Fission yeast).